The sequence spans 499 residues: Cobyric acid synthase (499 aa).

A GATase cobBQ-type domain is found at 246-441 (PIDIAIIKLP…IHGIFDGAEL (196 aa)). Catalysis depends on Cys-327, which acts as the Nucleophile. The active site involves His-433.

This sequence belongs to the CobB/CobQ family. CobQ subfamily.

The protein operates within cofactor biosynthesis; adenosylcobalamin biosynthesis. Its function is as follows. Catalyzes amidations at positions B, D, E, and G on adenosylcobyrinic A,C-diamide. NH(2) groups are provided by glutamine, and one molecule of ATP is hydrogenolyzed for each amidation. This Clostridium kluyveri (strain NBRC 12016) protein is Cobyric acid synthase.